The chain runs to 229 residues: Putative N-acetylmannosamine-6-phosphate 2-epimerase (229 aa).

It belongs to the NanE family.

It catalyses the reaction an N-acyl-D-glucosamine 6-phosphate = an N-acyl-D-mannosamine 6-phosphate. It functions in the pathway amino-sugar metabolism; N-acetylneuraminate degradation; D-fructose 6-phosphate from N-acetylneuraminate: step 3/5. In terms of biological role, converts N-acetylmannosamine-6-phosphate (ManNAc-6-P) to N-acetylglucosamine-6-phosphate (GlcNAc-6-P). The protein is Putative N-acetylmannosamine-6-phosphate 2-epimerase of Escherichia coli O157:H7.